The chain runs to 280 residues: Elongation factor Ts (280 aa).

Positions 79-82 (TDFV) are involved in Mg(2+) ion dislocation from EF-Tu.

It belongs to the EF-Ts family.

Its subcellular location is the cytoplasm. Associates with the EF-Tu.GDP complex and induces the exchange of GDP to GTP. It remains bound to the aminoacyl-tRNA.EF-Tu.GTP complex up to the GTP hydrolysis stage on the ribosome. This chain is Elongation factor Ts, found in Vibrio vulnificus (strain CMCP6).